A 250-amino-acid chain; its full sequence is Green-light absorbing proteorhodopsin (250 aa).

Residues 1–18 form the signal peptide; it reads MGKLLLILGSVIALPTFA. Topologically, residues 19-29 are extracellular; it reads AGGGDLDASDY. A helical membrane pass occupies residues 30–53; the sequence is TGVSFWLVTAALLASTVFFFVERD. The Cytoplasmic segment spans residues 54–58; it reads RVSAK. A helical transmembrane segment spans residues 59–87; it reads WKTSLTVSGLVTGIAFWHYMYMRGVWIET. The Extracellular portion of the chain corresponds to 88–90; the sequence is GDS. A helical transmembrane segment spans residues 91 to 118; it reads PTVFRYIDWLLTVPLLICEFYLILAAAT. The Cytoplasmic segment spans residues 119 to 121; sequence NVA. Residues 122–144 traverse the membrane as a helical segment; the sequence is GSLFKKLLVGSLVMLVFGYMGEA. Residues 145-147 lie on the Extracellular side of the membrane; sequence GIM. Residues 148 to 177 traverse the membrane as a helical segment; the sequence is AAWPAFIIGCLAWVYMIYELWAGEGKSACN. Residues 178-180 are Cytoplasmic-facing; the sequence is TAS. The chain crosses the membrane as a helical span at residues 181-208; the sequence is PAVQSAYNTMMYIIIFGWAIYPVGYFTG. The Extracellular portion of the chain corresponds to 209 to 218; sequence YLMGDGGSAL. Residues 219–249 traverse the membrane as a helical segment; that stretch reads NLNLIYNLADFVNKILFGLIIWNVAVKESSN. An N6-(retinylidene)lysine modification is found at Lys232. Position 250 (Ala250) is a topological domain, cytoplasmic.

Belongs to the archaeal/bacterial/fungal opsin family. Homopentamer. GPR protomers assemble into a pentamer around a central pore with a C5 symmetry axis. In terms of processing, contains one covalently linked retinal chromophore per subunit.

It localises to the cell membrane. Light-driven proton pump. This chain is Green-light absorbing proteorhodopsin, found in Unknown prokaryotic organism.